The chain runs to 392 residues: Chorismate synthase (392 aa).

NADP(+) is bound by residues Arg39 and Arg45. Residues 131–133 (RSS), 255–256 (NA), Gly300, 315–319 (KPIPT), and Arg341 each bind FMN.

Belongs to the chorismate synthase family. Homotetramer. The cofactor is FMNH2.

The catalysed reaction is 5-O-(1-carboxyvinyl)-3-phosphoshikimate = chorismate + phosphate. It participates in metabolic intermediate biosynthesis; chorismate biosynthesis; chorismate from D-erythrose 4-phosphate and phosphoenolpyruvate: step 7/7. Functionally, catalyzes the anti-1,4-elimination of the C-3 phosphate and the C-6 proR hydrogen from 5-enolpyruvylshikimate-3-phosphate (EPSP) to yield chorismate, which is the branch point compound that serves as the starting substrate for the three terminal pathways of aromatic amino acid biosynthesis. This reaction introduces a second double bond into the aromatic ring system. This is Chorismate synthase from Leuconostoc mesenteroides subsp. mesenteroides (strain ATCC 8293 / DSM 20343 / BCRC 11652 / CCM 1803 / JCM 6124 / NCDO 523 / NBRC 100496 / NCIMB 8023 / NCTC 12954 / NRRL B-1118 / 37Y).